We begin with the raw amino-acid sequence, 237 residues long: NAD(P)H-quinone oxidoreductase subunit K, chloroplastic (237 aa).

4 residues coordinate [4Fe-4S] cluster: cysteine 55, cysteine 56, cysteine 120, and cysteine 151.

Belongs to the complex I 20 kDa subunit family. As to quaternary structure, NDH is composed of at least 16 different subunits, 5 of which are encoded in the nucleus. The cofactor is [4Fe-4S] cluster.

It localises to the plastid. The protein localises to the chloroplast thylakoid membrane. The catalysed reaction is a plastoquinone + NADH + (n+1) H(+)(in) = a plastoquinol + NAD(+) + n H(+)(out). The enzyme catalyses a plastoquinone + NADPH + (n+1) H(+)(in) = a plastoquinol + NADP(+) + n H(+)(out). In terms of biological role, NDH shuttles electrons from NAD(P)H:plastoquinone, via FMN and iron-sulfur (Fe-S) centers, to quinones in the photosynthetic chain and possibly in a chloroplast respiratory chain. The immediate electron acceptor for the enzyme in this species is believed to be plastoquinone. Couples the redox reaction to proton translocation, and thus conserves the redox energy in a proton gradient. In Nephroselmis olivacea (Green alga), this protein is NAD(P)H-quinone oxidoreductase subunit K, chloroplastic.